A 95-amino-acid polypeptide reads, in one-letter code: Large ribosomal subunit protein bL25 (95 aa).

The protein belongs to the bacterial ribosomal protein bL25 family. Part of the 50S ribosomal subunit; part of the 5S rRNA/L5/L18/L25 subcomplex. Contacts the 5S rRNA. Binds to the 5S rRNA independently of L5 and L18.

Its function is as follows. This is one of the proteins that binds to the 5S RNA in the ribosome where it forms part of the central protuberance. This is Large ribosomal subunit protein bL25 from Shewanella pealeana (strain ATCC 700345 / ANG-SQ1).